We begin with the raw amino-acid sequence, 152 residues long: SsrA-binding protein (152 aa).

The protein belongs to the SmpB family.

Its subcellular location is the cytoplasm. Required for rescue of stalled ribosomes mediated by trans-translation. Binds to transfer-messenger RNA (tmRNA), required for stable association of tmRNA with ribosomes. tmRNA and SmpB together mimic tRNA shape, replacing the anticodon stem-loop with SmpB. tmRNA is encoded by the ssrA gene; the 2 termini fold to resemble tRNA(Ala) and it encodes a 'tag peptide', a short internal open reading frame. During trans-translation Ala-aminoacylated tmRNA acts like a tRNA, entering the A-site of stalled ribosomes, displacing the stalled mRNA. The ribosome then switches to translate the ORF on the tmRNA; the nascent peptide is terminated with the 'tag peptide' encoded by the tmRNA and targeted for degradation. The ribosome is freed to recommence translation, which seems to be the essential function of trans-translation. The sequence is that of SsrA-binding protein from Persephonella marina (strain DSM 14350 / EX-H1).